Here is a 116-residue protein sequence, read N- to C-terminus: Large ribosomal subunit protein bL19 (116 aa).

This sequence belongs to the bacterial ribosomal protein bL19 family.

Its function is as follows. This protein is located at the 30S-50S ribosomal subunit interface and may play a role in the structure and function of the aminoacyl-tRNA binding site. The chain is Large ribosomal subunit protein bL19 from Mycoplasma mobile (strain ATCC 43663 / 163K / NCTC 11711) (Mesomycoplasma mobile).